The primary structure comprises 401 residues: Riboflavin biosynthesis protein RibBA (401 aa).

A DHBP synthase region spans residues 1 to 203 (MTDFQFSKVE…IQQLQEYRRK (203 aa)). D-ribulose 5-phosphate contacts are provided by residues 30-31 (RE), Asp35, 142-146 (RNGHT), and Glu166. Glu31 contacts Mg(2+). His145 contacts Mg(2+). The tract at residues 204–401 (HDSLVKQISV…QIKMGHMFNF (198 aa)) is GTP cyclohydrolase II. 254–258 (RIHSE) contributes to the GTP binding site. Zn(2+) contacts are provided by Cys259, Cys270, and Cys272. GTP-binding positions include Gln275, 297-299 (EGR), and Thr319. Asp331 serves as the catalytic Proton acceptor; for GTP cyclohydrolase activity. Arg333 acts as the Nucleophile; for GTP cyclohydrolase activity in catalysis. 2 residues coordinate GTP: Thr354 and Lys359.

The protein in the N-terminal section; belongs to the DHBP synthase family. It in the C-terminal section; belongs to the GTP cyclohydrolase II family. It depends on Mg(2+) as a cofactor. Mn(2+) serves as cofactor. The cofactor is Zn(2+).

The enzyme catalyses D-ribulose 5-phosphate = (2S)-2-hydroxy-3-oxobutyl phosphate + formate + H(+). It catalyses the reaction GTP + 4 H2O = 2,5-diamino-6-hydroxy-4-(5-phosphoribosylamino)-pyrimidine + formate + 2 phosphate + 3 H(+). Its pathway is cofactor biosynthesis; riboflavin biosynthesis; 2-hydroxy-3-oxobutyl phosphate from D-ribulose 5-phosphate: step 1/1. It participates in cofactor biosynthesis; riboflavin biosynthesis; 5-amino-6-(D-ribitylamino)uracil from GTP: step 1/4. Catalyzes the conversion of D-ribulose 5-phosphate to formate and 3,4-dihydroxy-2-butanone 4-phosphate. Its function is as follows. Catalyzes the conversion of GTP to 2,5-diamino-6-ribosylamino-4(3H)-pyrimidinone 5'-phosphate (DARP), formate and pyrophosphate. The chain is Riboflavin biosynthesis protein RibBA from Actinobacillus pleuropneumoniae serotype 5b (strain L20).